Here is a 335-residue protein sequence, read N- to C-terminus: DNA-directed RNA polymerase subunit alpha (335 aa).

The tract at residues 1 to 233 (MTRTANEFLT…QQIAIFVDLQ (233 aa)) is alpha N-terminal domain (alpha-NTD). The interval 247 to 335 (VDPILLRPVD…MDDRFAYRSR (89 aa)) is alpha C-terminal domain (alpha-CTD).

It belongs to the RNA polymerase alpha chain family. As to quaternary structure, homodimer. The RNAP catalytic core consists of 2 alpha, 1 beta, 1 beta' and 1 omega subunit. When a sigma factor is associated with the core the holoenzyme is formed, which can initiate transcription.

The catalysed reaction is RNA(n) + a ribonucleoside 5'-triphosphate = RNA(n+1) + diphosphate. Functionally, DNA-dependent RNA polymerase catalyzes the transcription of DNA into RNA using the four ribonucleoside triphosphates as substrates. This Acinetobacter baylyi (strain ATCC 33305 / BD413 / ADP1) protein is DNA-directed RNA polymerase subunit alpha.